The chain runs to 364 residues: Protein LATERAL BRANCHING OXIDOREDUCTASE 1 (364 aa).

The 110-residue stretch at 203-312 (RFEEMFGEAV…RLTIVTFYAP (110 aa)) folds into the Fe2OG dioxygenase domain. Fe cation is bound by residues His235, Asp237, and His293. 2-oxoglutarate is bound at residue Arg303.

It belongs to the iron/ascorbate-dependent oxidoreductase family. Monomer. Requires Fe(2+) as cofactor. L-ascorbate serves as cofactor. In terms of tissue distribution, expressed in the vasculature throughout the plant and in the buds and root tips.

Its subcellular location is the cytoplasm. The enzyme catalyses (11R)-methyl carlactonoate + 2-oxoglutarate + O2 = (11R)-hydroxymethyl carlactonoate + succinate + CO2. Functionally, oxoglutarate-dependent dioxygenase involved in the biosynthesis of strigolactone natural products, bioactive compounds promoting plant fitness and soil microbe interactions, but preventing shoot branching. Catalyzes the hydroxylation of (11R)-methyl carlactonoate (MeCLA) to produce (11R)-hydroxymethyl carlactonoate (1'-HO-MeCLA) in final stages of strigolactone biosynthesis, downstream of MAX1 and CLAMT. The chain is Protein LATERAL BRANCHING OXIDOREDUCTASE 1 from Arabidopsis thaliana (Mouse-ear cress).